Reading from the N-terminus, the 539-residue chain is Chaperonin GroEL (539 aa).

ATP is bound by residues 29–32 (TLGP), 86–90 (DGTTT), glycine 412, 475–477 (NAA), and aspartate 491.

The protein belongs to the chaperonin (HSP60) family. Forms a cylinder of 14 subunits composed of two heptameric rings stacked back-to-back. Interacts with the co-chaperonin GroES.

It is found in the cytoplasm. The enzyme catalyses ATP + H2O + a folded polypeptide = ADP + phosphate + an unfolded polypeptide.. Functionally, together with its co-chaperonin GroES, plays an essential role in assisting protein folding. The GroEL-GroES system forms a nano-cage that allows encapsulation of the non-native substrate proteins and provides a physical environment optimized to promote and accelerate protein folding. In Tsukamurella tyrosinosolvens, this protein is Chaperonin GroEL.